The primary structure comprises 661 residues: UvrABC system protein B (661 aa).

The region spanning 28 to 414 (DGVNERKRHQ…HTDEMVEQII (387 aa)) is the Helicase ATP-binding domain. 41–48 (GATGTGKT) is an ATP binding site. A Beta-hairpin motif is present at residues 94–117 (YYDYYQPEAYVPSTDTFIEKDASI). The 167-residue stretch at 432 to 598 (QIDDLLSEIQ…TINKKIHDVI (167 aa)) folds into the Helicase C-terminal domain. The segment at 603–624 (ESDETNQQQQTELPKKMTKKER) is disordered. In terms of domain architecture, UVR spans 625–660 (QKTIENIEKEMKKAAKDLDFEKATELRDMLFELKAE).

Belongs to the UvrB family. In terms of assembly, forms a heterotetramer with UvrA during the search for lesions. Interacts with UvrC in an incision complex.

It localises to the cytoplasm. In terms of biological role, the UvrABC repair system catalyzes the recognition and processing of DNA lesions. A damage recognition complex composed of 2 UvrA and 2 UvrB subunits scans DNA for abnormalities. Upon binding of the UvrA(2)B(2) complex to a putative damaged site, the DNA wraps around one UvrB monomer. DNA wrap is dependent on ATP binding by UvrB and probably causes local melting of the DNA helix, facilitating insertion of UvrB beta-hairpin between the DNA strands. Then UvrB probes one DNA strand for the presence of a lesion. If a lesion is found the UvrA subunits dissociate and the UvrB-DNA preincision complex is formed. This complex is subsequently bound by UvrC and the second UvrB is released. If no lesion is found, the DNA wraps around the other UvrB subunit that will check the other stand for damage. In Staphylococcus epidermidis (strain ATCC 12228 / FDA PCI 1200), this protein is UvrABC system protein B.